The following is a 562-amino-acid chain: Arginine--tRNA ligase (562 aa).

The 'HIGH' region motif lies at 129-139; it reads ANPTGPLHVGH.

The protein belongs to the class-I aminoacyl-tRNA synthetase family. Monomer.

It localises to the cytoplasm. It carries out the reaction tRNA(Arg) + L-arginine + ATP = L-arginyl-tRNA(Arg) + AMP + diphosphate. In Xanthomonas oryzae pv. oryzae (strain KACC10331 / KXO85), this protein is Arginine--tRNA ligase.